A 734-amino-acid chain; its full sequence is 1,4-alpha-glucan branching enzyme GlgB (734 aa).

The active-site Nucleophile is the Asp-414. The active-site Proton donor is the Glu-467.

It belongs to the glycosyl hydrolase 13 family. GlgB subfamily. In terms of assembly, monomer.

It carries out the reaction Transfers a segment of a (1-&gt;4)-alpha-D-glucan chain to a primary hydroxy group in a similar glucan chain.. Its pathway is glycan biosynthesis; glycogen biosynthesis. In terms of biological role, catalyzes the formation of the alpha-1,6-glucosidic linkages in glycogen by scission of a 1,4-alpha-linked oligosaccharide from growing alpha-1,4-glucan chains and the subsequent attachment of the oligosaccharide to the alpha-1,6 position. The polypeptide is 1,4-alpha-glucan branching enzyme GlgB (Myxococcus xanthus (strain DK1622)).